Consider the following 185-residue polypeptide: Ribosome-recycling factor (185 aa).

This sequence belongs to the RRF family.

Its subcellular location is the cytoplasm. Its function is as follows. Responsible for the release of ribosomes from messenger RNA at the termination of protein biosynthesis. May increase the efficiency of translation by recycling ribosomes from one round of translation to another. In Pectobacterium carotovorum subsp. carotovorum (strain PC1), this protein is Ribosome-recycling factor.